Consider the following 327-residue polypeptide: Olfactory receptor 9G4 (327 aa).

The Extracellular segment spans residues 1 to 43 (MIFPSHDSQAFTSVDMEVGNCTILTEFILLGFSADSQWQPILF). N-linked (GlcNAc...) asparagine glycosylation is present at Asn20. Residues 44–64 (GVFLMLYLITLSGNMTLVILI) form a helical membrane-spanning segment. Residues 65-71 (RTDSHLH) lie on the Cytoplasmic side of the membrane. The chain crosses the membrane as a helical span at residues 72-92 (TPMYFFIGNLSFLDFWYTSVY). Topologically, residues 93-113 (TPKILASCVSEDKRISLAGCG) are extracellular. The cysteines at positions 112 and 194 are disulfide-linked. The chain crosses the membrane as a helical span at residues 114 to 134 (AQLFFSCVVAYTECYLLAAMA). Over 135-152 (YDRHAAICNPLLYSGTMS) the chain is Cytoplasmic. The chain crosses the membrane as a helical span at residues 153–173 (TALCTGLVAGSYIGGFLNAIA). Residues 174-212 (HTANTFRLHFCGKNIIDHFFCDAPPLVKMSCTNTRVYEK) are Extracellular-facing. The chain crosses the membrane as a helical span at residues 213–233 (VLLGVVGFTVLSSILAILISY). Residues 234–252 (VNILLAILRIHSASGRHKA) lie on the Cytoplasmic side of the membrane. Residues 253-273 (FSTCASHLISVMLFYGSLLFM) form a helical membrane-spanning segment. The Extracellular segment spans residues 274 to 286 (YSRPSSTYSLERD). Residues 287–307 (KVAALFYTVINPLLNPLIYSL) form a helical membrane-spanning segment. Topologically, residues 308–327 (RNKDIKEAFRKATQTIQPQT) are cytoplasmic.

The protein belongs to the G-protein coupled receptor 1 family.

It localises to the cell membrane. Its function is as follows. Odorant receptor. The sequence is that of Olfactory receptor 9G4 (OR9G4) from Homo sapiens (Human).